The sequence spans 202 residues: LexA repressor (202 aa).

A DNA-binding region (H-T-H motif) is located at residues R28–K48. Active-site for autocatalytic cleavage activity residues include S119 and K156.

The protein belongs to the peptidase S24 family. As to quaternary structure, homodimer.

The enzyme catalyses Hydrolysis of Ala-|-Gly bond in repressor LexA.. Functionally, represses a number of genes involved in the response to DNA damage (SOS response), including recA and lexA. Binds to the 16 bp palindromic sequence 5'-CTGTATATATATACAG-3'. In the presence of single-stranded DNA, RecA interacts with LexA causing an autocatalytic cleavage which disrupts the DNA-binding part of LexA, leading to derepression of the SOS regulon and eventually DNA repair. The chain is LexA repressor from Enterobacter sp. (strain 638).